A 164-amino-acid polypeptide reads, in one-letter code: General odorant-binding protein 1 (164 aa).

An N-terminal signal peptide occupies residues 1 to 18 (MWKLVVVLTVNLLQGALT). 3 disulfide bridges follow: Cys-37-Cys-72, Cys-68-Cys-126, and Cys-115-Cys-135.

Belongs to the PBP/GOBP family. In terms of assembly, homodimer. Antenna.

Its function is as follows. Present in the aqueous fluid surrounding olfactory sensory dendrites and are thought to aid in the capture and transport of hydrophobic odorants into and through this fluid. This is General odorant-binding protein 1 from Bombyx mori (Silk moth).